We begin with the raw amino-acid sequence, 285 residues long: MSTNDNWYIEHFQPTGSAIGFRISGKLDEVQSPFQKIEIYQTTDWGKLMLIDGAVMLTSRDNFFYHEMISHPALFTHPAPKRVVIIGGGDCGTLREVLKHPGVESATQCDIDEQVTRMSEKYFPELCDANHDARAELLFDDGVAYMANCPAGSVDIVIVDSTDPVGPAEGLFNKAFYESCFKALKDEGILVQQSESPLALLDLINEMRTEMGKAGFQSFKTLPFPQPCYPTGWWSVTMASKQANADFAFRQADAQAKGFDTLYYTAHLHTGVLVAPPFVAKALGE.

The PABS domain occupies 5-241 (DNWYIEHFQP…GWWSVTMASK (237 aa)). Glutamine 35 contacts S-methyl-5'-thioadenosine. Histidine 66 and aspartate 90 together coordinate spermidine. Residues aspartate 110 and 141 to 142 (DG) contribute to the S-methyl-5'-thioadenosine site. Aspartate 160 acts as the Proton acceptor in catalysis. 160 to 163 (DSTD) contacts spermidine. Proline 167 contacts S-methyl-5'-thioadenosine.

It belongs to the spermidine/spermine synthase family. Homodimer or homotetramer.

The protein resides in the cytoplasm. It catalyses the reaction S-adenosyl 3-(methylsulfanyl)propylamine + putrescine = S-methyl-5'-thioadenosine + spermidine + H(+). Its pathway is amine and polyamine biosynthesis; spermidine biosynthesis; spermidine from putrescine: step 1/1. Functionally, catalyzes the irreversible transfer of a propylamine group from the amino donor S-adenosylmethioninamine (decarboxy-AdoMet) to putrescine (1,4-diaminobutane) to yield spermidine. In Xanthomonas euvesicatoria pv. vesicatoria (strain 85-10) (Xanthomonas campestris pv. vesicatoria), this protein is Polyamine aminopropyltransferase.